Here is a 63-residue protein sequence, read N- to C-terminus: Metallothionein (63 aa).

Positions 1-30 (MDPQDCTCAAGDSCSCAGSCKCKNCRCRSC) are beta. 20 residues coordinate a divalent metal cation: Cys-6, Cys-8, Cys-14, Cys-16, Cys-20, Cys-22, Cys-25, Cys-27, Cys-30, Cys-34, Cys-35, Cys-37, Cys-38, Cys-42, Cys-45, Cys-49, Cys-51, Cys-59, Cys-61, and Cys-62. The interval 31–63 (RKSCCSCCPAGCNNCAKGCVCKEPASSKCSCCH) is alpha.

The protein belongs to the metallothionein superfamily. Type 1 family.

Metallothioneins have a high content of cysteine residues that bind various heavy metals. This is Metallothionein from Anas platyrhynchos (Mallard).